The sequence spans 559 residues: MASVAVENNVVNHIAEEIIRPVADFSPSLWGDRFLSFSIDNQVETKYAQEIEPLKEQTRSMLLASGRKLSETLNLIDVIERLGIAYHFEKEIDEILDRIYNENSNFEGDVYNEDLCTCRLQFRLLRQHGYNISLKIFSKFLDGNGRLKESLASDVLGLLSLYEASHVRSHGEDILEDALAFSTTHLESATPHLEYPLKEQVRHALEQSLHKGIPRIEIQFFISSVYDKQAIKNDVLLRFAKLDYNMLQMLHKQELAEVSRWWKDLNFVNTLPYARDRVVECYFWALGVYYEPQYSQARVMLVKTIAMISIVDDTYDAYGTVDELAIYTDVIQRWDIKEIDSLPDYMKISYKALLDLYKDYEKEMSRDGRSHVVYYAKERLKELVKSYNIEAKWFIEGHMPPASEYLRNAFVTTTYYYLATTSYLGMKYAKEQQFEWLSKNPKILEGCVTICRVIDDIATYEVEKNRGQLSTGIECYMRDYSVSTKEAMAKFQEMGESGWKDINEGMLRPTPIPMEFLSRILNLARLVDVTYKHNEDGYTHPEKVIKPHIIAMVVDSFKI.

D312, D316, D455, T459, and E463 together coordinate Mg(2+). The DDXXD motif signature appears at D312 to D316.

This sequence belongs to the terpene synthase family. Monomer. Mg(2+) serves as cofactor. In terms of tissue distribution, expressed only in treated leaves an not detected in control leaves.

The protein resides in the cytoplasm. It carries out the reaction (2E,6E)-farnesyl diphosphate = (+)-5-epi-aristolochene + diphosphate. Its pathway is secondary metabolite biosynthesis; terpenoid biosynthesis. Catalyzes the cyclization of trans,trans-farnesyl diphosphate (FPP) to the bicyclic intermediate 5-epi-aristolochene, initial step in the conversion of FPP to the sesquiterpenoid antifungal phytoalexin capsidiol. Produces germacrene A as an enzyme-bound intermediate that is not released by the enzyme, but is further cyclized to produce the bicyclic 5-epi-aristolochene. This Capsicum annuum (Capsicum pepper) protein is 5-epiaristolochene synthase (EAS).